The chain runs to 461 residues: Fumarate hydratase class II (461 aa).

Residues 99–101, Arg127, 130–133, 140–142, and Thr188 contribute to the substrate site; these read SGT, HPND, and SSN. His189 serves as the catalytic Proton donor/acceptor. The active site involves Ser319. Substrate-binding positions include Ser320 and 325 to 327; that span reads KVN.

This sequence belongs to the class-II fumarase/aspartase family. Fumarase subfamily. As to quaternary structure, homotetramer.

The protein resides in the cytoplasm. It carries out the reaction (S)-malate = fumarate + H2O. It participates in carbohydrate metabolism; tricarboxylic acid cycle; (S)-malate from fumarate: step 1/1. Involved in the TCA cycle. Catalyzes the stereospecific interconversion of fumarate to L-malate. The chain is Fumarate hydratase class II from Chromobacterium violaceum (strain ATCC 12472 / DSM 30191 / JCM 1249 / CCUG 213 / NBRC 12614 / NCIMB 9131 / NCTC 9757 / MK).